Consider the following 422-residue polypeptide: MDQFLITGSSRIAGEVTISGAKNAALPLLAAMILAETPTTLHNVPSLQDVRTLIELIGGMGIKIQKQGDTVTCDTKSIDNFYAPYDLVKTMRASILVLGPLLARFGEAEVSLPGGCAIGSRPVDQHLKAFEAMGASITVENGYVIAQAPKGGKLLGCKFSFDMVTVGGTENVIMAAALAKGTTVLGNCALEPEVVDLANMLVAMGAKISGIGTAIMTIEGVERLHGCEYAVVPDRIETGSYLAGALMTGGDVLTKNTSALLLTPVLEKFEDMGAIITSGDDWIRAQMKGRPKAVDIRTQPHPGFPTDMQAQVMAIACLADGTSTFIENIFENRYMHVPELNRLGASIQVDGHTAVVKGVECFTAAPVMATDLRASMSLVMAAAAAEGESLIDRIYHIDRGYEHVEKKLRALGVNIERINSND.

A phosphoenolpyruvate-binding site is contributed by 22-23 (KN). Residue Arg-92 participates in UDP-N-acetyl-alpha-D-glucosamine binding. Catalysis depends on Cys-116, which acts as the Proton donor. The residue at position 116 (Cys-116) is a 2-(S-cysteinyl)pyruvic acid O-phosphothioketal. UDP-N-acetyl-alpha-D-glucosamine-binding positions include 121–125 (RPVDQ), Asp-307, and Ile-329.

The protein belongs to the EPSP synthase family. MurA subfamily.

Its subcellular location is the cytoplasm. The enzyme catalyses phosphoenolpyruvate + UDP-N-acetyl-alpha-D-glucosamine = UDP-N-acetyl-3-O-(1-carboxyvinyl)-alpha-D-glucosamine + phosphate. It participates in cell wall biogenesis; peptidoglycan biosynthesis. Cell wall formation. Adds enolpyruvyl to UDP-N-acetylglucosamine. The sequence is that of UDP-N-acetylglucosamine 1-carboxyvinyltransferase from Psychrobacter arcticus (strain DSM 17307 / VKM B-2377 / 273-4).